We begin with the raw amino-acid sequence, 238 residues long: Ribonuclease PH (238 aa).

Residues Arg-86 and 124 to 126 (GTR) each bind phosphate.

The protein belongs to the RNase PH family. Homohexameric ring arranged as a trimer of dimers.

The catalysed reaction is tRNA(n+1) + phosphate = tRNA(n) + a ribonucleoside 5'-diphosphate. Its function is as follows. Phosphorolytic 3'-5' exoribonuclease that plays an important role in tRNA 3'-end maturation. Removes nucleotide residues following the 3'-CCA terminus of tRNAs; can also add nucleotides to the ends of RNA molecules by using nucleoside diphosphates as substrates, but this may not be physiologically important. Probably plays a role in initiation of 16S rRNA degradation (leading to ribosome degradation) during starvation. This is Ribonuclease PH from Enterobacter sp. (strain 638).